Here is a 734-residue protein sequence, read N- to C-terminus: Polyribonucleotide nucleotidyltransferase (734 aa).

Residues Asp497 and Asp503 each contribute to the Mg(2+) site. The region spanning 564–623 is the KH domain; sequence PRIIHITIDPDKIRDVIGPGGKVIKKIVEETGAEIDIEDDGRVFIAAVDQEKGRKAQEII. Residues 633–707 form the S1 motif domain; that stretch reads GEIYTGRVTR…SQGRLKLSKK (75 aa). The disordered stretch occupies residues 700 to 734; the sequence is GRLKLSKKEATPPPESTAMKEGRAHRPSRRRESAR. The span at 717–734 shows a compositional bias: basic and acidic residues; it reads AMKEGRAHRPSRRRESAR.

The protein belongs to the polyribonucleotide nucleotidyltransferase family. Mg(2+) serves as cofactor.

It localises to the cytoplasm. The catalysed reaction is RNA(n+1) + phosphate = RNA(n) + a ribonucleoside 5'-diphosphate. Involved in mRNA degradation. Catalyzes the phosphorolysis of single-stranded polyribonucleotides processively in the 3'- to 5'-direction. The chain is Polyribonucleotide nucleotidyltransferase from Pelotomaculum thermopropionicum (strain DSM 13744 / JCM 10971 / SI).